A 253-amino-acid polypeptide reads, in one-letter code: uncharacterized protein (253 aa).

This is an uncharacterized protein from Caenorhabditis elegans.